A 258-amino-acid chain; its full sequence is Global transcriptional regulator CodY (258 aa).

A GAF domain region spans residues 1–156; it reads MSTLLSKTRR…SATIVGMELL (156 aa). Positions 204 to 223 form a DNA-binding region, H-T-H motif; it reads ASKIADKVGITRSVIVNALR.

Belongs to the CodY family.

It localises to the cytoplasm. DNA-binding global transcriptional regulator which is involved in the adaptive response to starvation and acts by directly or indirectly controlling the expression of numerous genes in response to nutrient availability. During rapid exponential growth, CodY is highly active and represses genes whose products allow adaptation to nutrient depletion. The chain is Global transcriptional regulator CodY from Clostridium perfringens (strain SM101 / Type A).